A 318-amino-acid polypeptide reads, in one-letter code: Transaldolase (318 aa).

The Schiff-base intermediate with substrate role is filled by Lys-132.

This sequence belongs to the transaldolase family. Type 1 subfamily. Homodimer.

It is found in the cytoplasm. It catalyses the reaction D-sedoheptulose 7-phosphate + D-glyceraldehyde 3-phosphate = D-erythrose 4-phosphate + beta-D-fructose 6-phosphate. The protein operates within carbohydrate degradation; pentose phosphate pathway; D-glyceraldehyde 3-phosphate and beta-D-fructose 6-phosphate from D-ribose 5-phosphate and D-xylulose 5-phosphate (non-oxidative stage): step 2/3. Functionally, transaldolase is important for the balance of metabolites in the pentose-phosphate pathway. This is Transaldolase from Shewanella baltica (strain OS195).